Reading from the N-terminus, the 148-residue chain is Insoluble matrix shell protein 1 (148 aa).

Positions 105–128 (KSGRTEARNTDDSGDPIIDPRTAD) are disordered.

As to expression, component of the acid-insoluble organic matrix of the calcified shell.

It localises to the secreted. This is Insoluble matrix shell protein 1 from Ruditapes philippinarum (Japanese carpet shell).